The primary structure comprises 232 residues: MKKVLFYVLPFAFFGCSATVDPQISMKPPAYVEELAPKQSNNVESAPGSLFGKGDNPLFSDKKAMNVNDLVTVVIQESTTQSTQANKATSRTNTSNLGGGALTGSSGVVANALNKVNAYSNIGFQTNSSNKYTGTGSQSRNESFNTTISTRVIKILSNGNYFIEGSRELLINGEKQIIQLSGVIRPYDIGQDNTIDSKYIADAKILYKTEGEVDRSTRKPWGSKVIEAIWPF.

The first 15 residues, 1 to 15 (MKKVLFYVLPFAFFG), serve as a signal peptide directing secretion. Cysteine 16 carries the N-palmitoyl cysteine lipid modification. Residue cysteine 16 is the site of S-diacylglycerol cysteine attachment.

This sequence belongs to the FlgH family. The basal body constitutes a major portion of the flagellar organelle and consists of four rings (L,P,S, and M) mounted on a central rod.

It localises to the cell outer membrane. The protein resides in the bacterial flagellum basal body. In terms of biological role, assembles around the rod to form the L-ring and probably protects the motor/basal body from shearing forces during rotation. The polypeptide is Flagellar L-ring protein (Campylobacter jejuni subsp. jejuni serotype O:23/36 (strain 81-176)).